Reading from the N-terminus, the 617-residue chain is MSAKQKNYAIETFTEPERIRNFCIIAHIDHGKSTLADRILDLSGVIEHRDMRDRYLDNMELERERGITIKAQNVRIPWVPKSGAHEGEQLVLQLIDTPGHVDFTYEVSRALEACEGAILLVDAAQGIEAQTLANLYLAMDKDLEIIPVLNKIDLPAADPEKYSQELANIIGCEPEEVLRVSGKTGEGVPELLDRVCELVPHPVGDPDAPARALIFDSVYDTYRGVVTYVRMMDGRLNDREKNKMMSTGTEHDTLEIGVVSPGPTKTKGLSVGEVGYLITGVKDVRQSKVGDTVTLAHNGATEPLQGYAEPKPMVYSGLFPISADQYPELREAIEKLQLNDASLSFEPETSVALGFGFRCGFLGLLHMEITRTRLEREFGLDLISTAPSVVYRVIQEDGTETFVRNPSDWPGGKLQAVYEPMVDMTIIVPEAFLGGTMELCQSKRGQMKNMDFLSQDRVELRYRIPLGEIIFDFFDSLKSRTKGYASLNYEEAGEEQADLVKVDILLQGEPVDAFSAIVHRENAHYYGNKMAVKLKDLIPRQQFEVPIQAAIGSKIIARENIRALRKDVLAKCYGGDISRKRKLLEKQKEGKKRMKNIGTVSVPQEAFVAALSTGGED.

Residues 17–203 enclose the tr-type G domain; that stretch reads ERIRNFCIIA…RVCELVPHPV (187 aa). GTP-binding positions include 29 to 34 and 150 to 153; these read DHGKST and NKID.

It belongs to the TRAFAC class translation factor GTPase superfamily. Classic translation factor GTPase family. LepA subfamily.

It is found in the cell membrane. The enzyme catalyses GTP + H2O = GDP + phosphate + H(+). Required for accurate and efficient protein synthesis under certain stress conditions. May act as a fidelity factor of the translation reaction, by catalyzing a one-codon backward translocation of tRNAs on improperly translocated ribosomes. Back-translocation proceeds from a post-translocation (POST) complex to a pre-translocation (PRE) complex, thus giving elongation factor G a second chance to translocate the tRNAs correctly. Binds to ribosomes in a GTP-dependent manner. In Corynebacterium urealyticum (strain ATCC 43042 / DSM 7109), this protein is Elongation factor 4.